The following is a 317-amino-acid chain: Ribosomal RNA small subunit methyltransferase H (317 aa).

S-adenosyl-L-methionine contacts are provided by residues 30–32 (GGH), Asp50, Tyr78, Asp95, and Gln102.

Belongs to the methyltransferase superfamily. RsmH family.

The protein resides in the cytoplasm. The enzyme catalyses cytidine(1402) in 16S rRNA + S-adenosyl-L-methionine = N(4)-methylcytidine(1402) in 16S rRNA + S-adenosyl-L-homocysteine + H(+). Its function is as follows. Specifically methylates the N4 position of cytidine in position 1402 (C1402) of 16S rRNA. The protein is Ribosomal RNA small subunit methyltransferase H of Nitrosomonas eutropha (strain DSM 101675 / C91 / Nm57).